The following is a 362-amino-acid chain: Adenosine deaminase (362 aa).

Residues His-41 and His-43 each coordinate Zn(2+). His-43–Asp-45 serves as a coordination point for a purine D-ribonucleoside. Residues Ile-169–Ala-183 form a gating helix loop; regulates binding affinity for substrates and thus substrate selectivity region. A purine D-ribonucleoside is bound at residue Gly-200. His-225 is a binding site for Zn(2+). Residues Glu-228, His-252, and Asp-309 each coordinate a purine D-ribonucleoside. Asp-309 provides a ligand contact to Zn(2+).

The protein belongs to the metallo-dependent hydrolases superfamily. Adenosine and AMP deaminases family. It depends on Zn(2+) as a cofactor.

It carries out the reaction adenosine + H2O + H(+) = inosine + NH4(+). It participates in purine metabolism; purine nucleoside salvage. With respect to regulation, inhibited by coformycin but not by methylthiocoformycin (MT-coformycin). Functionally, catalyzes the hydrolytic deamination of adenosine to produce inosine. Unlike other Plasmodium adenosine deaminases, does not catalyze the deamination of 5'-methylthioadenosine (MTA). Plays an essential role in the purine salvage pathway which allows the parasite to use host cell purines for the synthesis of nucleic acids. This chain is Adenosine deaminase, found in Plasmodium gallinaceum.